The primary structure comprises 44 residues: uncharacterized protein (44 aa).

This is an uncharacterized protein from Methanocaldococcus jannaschii (strain ATCC 43067 / DSM 2661 / JAL-1 / JCM 10045 / NBRC 100440) (Methanococcus jannaschii).